The chain runs to 187 residues: Peroxisome assembly protein 22 (187 aa).

Residues 7–29 (NTFFGLAALGALGLGYSVYKSFI) traverse the membrane as a helical segment.

Belongs to the peroxin-22 family. In terms of assembly, interacts with PEX4.

Its subcellular location is the peroxisome membrane. Involved in peroxisome biogenesis. The protein is Peroxisome assembly protein 22 (PEX22) of Komagataella pastoris (Yeast).